A 117-amino-acid chain; its full sequence is Immunoglobulin heavy variable 5-10-1 (117 aa).

An N-terminal signal peptide occupies residues 1–19 (MGSTAILALLLAVLQGVCA). Residues 20–44 (EVQLVQSGAEVKKPGESLRISCKGS) are framework-1. The region spanning 20–117 (EVQLVQSGAE…SDTAMYYCAR (98 aa)) is the Ig-like domain. Residues Cys41 and Cys115 are joined by a disulfide bond. The segment at 45–52 (GYSFTSYW) is complementarity-determining-1. The interval 53–69 (ISWVRQMPGKGLEWMGR) is framework-2. Positions 70 to 77 (IDPSDSYT) are complementarity-determining-2. Positions 78 to 115 (NYSPSFQGHVTISADKSISTAYLQWSSLKASDTAMYYC) are framework-3. Positions 116–117 (AR) are complementarity-determining-3.

Immunoglobulins are composed of two identical heavy chains and two identical light chains; disulfide-linked.

It is found in the secreted. Its subcellular location is the cell membrane. Functionally, v region of the variable domain of immunoglobulin heavy chains that participates in the antigen recognition. Immunoglobulins, also known as antibodies, are membrane-bound or secreted glycoproteins produced by B lymphocytes. In the recognition phase of humoral immunity, the membrane-bound immunoglobulins serve as receptors which, upon binding of a specific antigen, trigger the clonal expansion and differentiation of B lymphocytes into immunoglobulins-secreting plasma cells. Secreted immunoglobulins mediate the effector phase of humoral immunity, which results in the elimination of bound antigens. The antigen binding site is formed by the variable domain of one heavy chain, together with that of its associated light chain. Thus, each immunoglobulin has two antigen binding sites with remarkable affinity for a particular antigen. The variable domains are assembled by a process called V-(D)-J rearrangement and can then be subjected to somatic hypermutations which, after exposure to antigen and selection, allow affinity maturation for a particular antigen. The chain is Immunoglobulin heavy variable 5-10-1 from Homo sapiens (Human).